An 82-amino-acid chain; its full sequence is Small ribosomal subunit protein uS17 (82 aa).

It belongs to the universal ribosomal protein uS17 family. Part of the 30S ribosomal subunit.

Its function is as follows. One of the primary rRNA binding proteins, it binds specifically to the 5'-end of 16S ribosomal RNA. The protein is Small ribosomal subunit protein uS17 of Bradyrhizobium diazoefficiens (strain JCM 10833 / BCRC 13528 / IAM 13628 / NBRC 14792 / USDA 110).